A 387-amino-acid chain; its full sequence is Paralemmin-1 (387 aa).

Met-1 is modified (N-acetylmethionine). Positions 7-104 form a coiled coil; the sequence is ETISQQERLQ…IEELENADTL (98 aa). Disordered regions lie at residues 22–78 and 98–133; these read RRRQ…QEDE and LENA…DRKA. Basic and acidic residues-rich tracts occupy residues 25–41 and 69–78; these read QAEV…DRRQ and DMRKQMQEDE. A Phosphoserine modification is found at Ser-116. Over residues 116 to 125 the composition is skewed to pro residues; sequence SPGPVVPAPC. Phosphothreonine is present on residues Thr-142 and Thr-146. Ser-163 carries the post-translational modification Phosphoserine. At Thr-244 the chain carries Phosphothreonine. Ser-246 is subject to Phosphoserine. Disordered stretches follow at residues 246-297 and 334-378; these read SEAG…QEPP and AAEP…DMKK. Positions 258-273 are enriched in basic and acidic residues; sequence GPSEEVVRTTPSRREI. The segment covering 286-297 has biased composition (low complexity); the sequence is GPPGIQPGQEPP. Phosphoserine occurs at positions 346 and 369. S-palmitoyl cysteine attachment occurs at residues Cys-381 and Cys-383. Cys-384 carries the cysteine methyl ester modification. The S-farnesyl cysteine moiety is linked to residue Cys-384. A propeptide spans 385-387 (removed in mature form); it reads SIM.

The protein belongs to the paralemmin family. Interacts with dopamine receptor DRD3. In terms of processing, phosphorylated.

The protein localises to the cell membrane. It localises to the cell projection. Its subcellular location is the filopodium membrane. It is found in the axon. The protein resides in the dendrite. The protein localises to the dendritic spine. It localises to the basolateral cell membrane. Its subcellular location is the apicolateral cell membrane. Its function is as follows. Involved in plasma membrane dynamics and cell process formation. Necessary for axonal and dendritic filopodia induction, for dendritic spine maturation and synapse formation in a palmitoylation-dependent manner. This is Paralemmin-1 (PALM) from Sus scrofa (Pig).